The chain runs to 420 residues: Xyloglucan O-acetyltransferase 4 (420 aa).

Topologically, residues 1 to 30 (MTMHEKMKLPSCSCSAFKCGKKDRWLNMER) are cytoplasmic. A helical; Signal-anchor for type II membrane protein transmembrane segment spans residues 31-51 (PIPFLLIGLTTILSVFILYTL). Topologically, residues 52–420 (NPLKFVIEHN…LLLAVLRRLD (369 aa)) are lumenal. 4 cysteine pairs are disulfide-bonded: cysteine 78-cysteine 128, cysteine 99-cysteine 164, cysteine 108-cysteine 400, and cysteine 323-cysteine 396. Asparagine 96 carries N-linked (GlcNAc...) asparagine glycosylation. The short motif at 151–153 (GDS) is the GDS motif element. Serine 153 acts as the Nucleophile in catalysis. Residues asparagine 192, asparagine 212, asparagine 270, and asparagine 324 are each glycosylated (N-linked (GlcNAc...) asparagine). The Proton donor role is filled by aspartate 395. Positions 395-398 (DCVH) match the DXXH motif motif. The active-site Proton acceptor is histidine 398.

The protein belongs to the PC-esterase family. TBL subfamily.

The protein resides in the golgi apparatus membrane. Its function is as follows. Xyloglucan acetyltransferase that catalyzes the acetylation of fucosylated Gal residues on xyloglucan side chains. Predominantly catalyze 6-O-monoacetylation of Gal residues in the Fuc-Gal-Xyl trisaccharide side chains of xyloglucan oligomers. This Populus trichocarpa (Western balsam poplar) protein is Xyloglucan O-acetyltransferase 4.